We begin with the raw amino-acid sequence, 791 residues long: Probable phosphoketolase (791 aa).

It belongs to the XFP family. Requires thiamine diphosphate as cofactor.

In Pseudomonas putida (strain ATCC 700007 / DSM 6899 / JCM 31910 / BCRC 17059 / LMG 24140 / F1), this protein is Probable phosphoketolase.